The chain runs to 325 residues: GMP reductase (325 aa).

Cysteine 174 (thioimidate intermediate) is an active-site residue. NADP(+) is bound at residue 203–226 (IIADGGIRTHGDIAKSIRFGATMV).

This sequence belongs to the IMPDH/GMPR family. GuaC type 2 subfamily.

It catalyses the reaction IMP + NH4(+) + NADP(+) = GMP + NADPH + 2 H(+). Its function is as follows. Catalyzes the irreversible NADPH-dependent deamination of GMP to IMP. It functions in the conversion of nucleobase, nucleoside and nucleotide derivatives of G to A nucleotides, and in maintaining the intracellular balance of A and G nucleotides. The chain is GMP reductase from Helicobacter pylori (strain J99 / ATCC 700824) (Campylobacter pylori J99).